Here is a 133-residue protein sequence, read N- to C-terminus: Global transcriptional regulator Spx (133 aa).

An intrachain disulfide couples Cys10 to Cys13.

This sequence belongs to the ArsC family. Spx subfamily. As to quaternary structure, interacts with the C-terminal domain of the alpha subunit of the RNAP.

The protein resides in the cytoplasm. Functionally, global transcriptional regulator that plays a key role in stress response and exerts either positive or negative regulation of genes. Acts by interacting with the C-terminal domain of the alpha subunit of the RNA polymerase (RNAP). This interaction can enhance binding of RNAP to the promoter region of target genes and stimulate their transcription, or block interaction of RNAP with activator. The chain is Global transcriptional regulator Spx from Streptococcus pneumoniae serotype 4 (strain ATCC BAA-334 / TIGR4).